The chain runs to 518 residues: Motile sperm domain-containing protein 2 (518 aa).

Residues 1–496 are Cytoplasmic-facing; that stretch reads MAENNAQNKA…QLQRSIWFQQ (496 aa). Residues 85 to 239 form the CRAL-TRIO domain; it reads IPRWLLELGG…HMGGTDPFKY (155 aa). Residues 252 to 312 are disordered; the sequence is PLCENGPIAS…KDENEKVDSK (61 aa). 2 stretches are compositionally biased toward basic and acidic residues: residues 265–279 and 300–312; these read TSSKEDIEGDGKETL and VSKKDENEKVDSK. The MSP domain occupies 327 to 445; that stretch reads LLHISPAEEL…MEHRLRCHTV (119 aa). The required for FFAT motif binding and phosphorylated FFAT motif binding stretch occupies residues 365-366; sequence RT. A helical; Anchor for type IV membrane protein membrane pass occupies residues 497–518; the sequence is LLLALTMVLLDFVVSFFYSLYN.

As to quaternary structure, homooligomer. Interacts (via MSP domain) with STARD3NL (via FFAT motif), RMDN3 (via FFAT motif), OSBPL1A (via FFAT motif) and CERT1 (via FFAT motif). Interacts (via MSP domain) with STARD3 (via phosphorylated FFAT motif); this interaction depends on the critical phosphorylation of STARD3 on 'Ser-209'. Interacts with RB1CC1 (via phosphorylated FFAT motif), MIGA2 (via phosphorylated FFAT motif) and OSBPL1A (via FFAT motif).

The protein localises to the endoplasmic reticulum membrane. In terms of biological role, endoplasmic reticulum-anchored protein that mediates the formation of contact sites between the endoplasmic (ER) and endosomes, mitochondria or Golgi through interaction with conventional- and phosphorylated-FFAT-containing organelle-bound proteins. In addition, forms endoplasmic reticulum (ER)-lipid droplets (LDs) contacts through a direct protein-membrane interaction and participates in LDs homeostasis. The attachment mechanism involves an amphipathic helix that has an affinity for lipid packing defects present at the surface of LDs. Promotes migration of primary monocytes and neutrophils, in response to various chemokines. The sequence is that of Motile sperm domain-containing protein 2 from Mus musculus (Mouse).